The primary structure comprises 263 residues: 3-methyl-2-oxobutanoate hydroxymethyltransferase (263 aa).

Residues Asp45 and Asp84 each coordinate Mg(2+). Residues 45-46, Asp84, and Lys112 contribute to the 3-methyl-2-oxobutanoate site; that span reads DS. Glu114 lines the Mg(2+) pocket. Residue Glu181 is the Proton acceptor of the active site.

This sequence belongs to the PanB family. Homodecamer; pentamer of dimers. Requires Mg(2+) as cofactor.

The protein resides in the cytoplasm. The catalysed reaction is 3-methyl-2-oxobutanoate + (6R)-5,10-methylene-5,6,7,8-tetrahydrofolate + H2O = 2-dehydropantoate + (6S)-5,6,7,8-tetrahydrofolate. It participates in cofactor biosynthesis; (R)-pantothenate biosynthesis; (R)-pantoate from 3-methyl-2-oxobutanoate: step 1/2. In terms of biological role, catalyzes the reversible reaction in which hydroxymethyl group from 5,10-methylenetetrahydrofolate is transferred onto alpha-ketoisovalerate to form ketopantoate. The sequence is that of 3-methyl-2-oxobutanoate hydroxymethyltransferase from Buchnera aphidicola subsp. Acyrthosiphon pisum (strain 5A).